Consider the following 601-residue polypeptide: Potassium channel KAT2 (601 aa).

Residues 1 to 42 (METISNIFHNDPLPPLGARANQSIKLRKFIISPYDSRYRTWE) lie on the Cytoplasmic side of the membrane. A helical membrane pass occupies residues 43–63 (TFLLVLVVYSAWICPFELAYL). Over 64–71 (RNLSWKVS) the chain is Extracellular. The helical transmembrane segment at 72–92 (LVDNIIDSFFAIDIILTFFLA) threads the bilayer. The Cytoplasmic segment spans residues 93-112 (YLDQKSYLLVDDPKRIVARY). Residues 113 to 133 (FSSWFLFDVCSTIPYQLLGQI) traverse the membrane as a helical segment. Over 134–144 (FKKHENGLAYR) the chain is Extracellular. The chain crosses the membrane as a helical; Voltage-sensor span at residues 145-165 (LLSMLRLWRLRRLSELFARLE). At 166-179 (KDIRLNYYWIRCTK) the chain is on the cytoplasmic side. The helical transmembrane segment at 180 to 200 (LISVTLFAVHCSGCFNYLIAD) threads the bilayer. At 201–227 (RYPNPARTWIGAAIPNYRSQNLWVRYV) the chain is on the extracellular side. Residues 228–247 (TAIYWSITTLTTTGYGDLHA) constitute an intramembrane region (pore-forming). Residues 248–251 (ENQR) are Extracellular-facing. The chain crosses the membrane as a helical span at residues 252–272 (EMLFSICYMLFNLGLTAYLIG). Residues 273 to 601 (NMTNLVVQGS…DGDHLFFMEI (329 aa)) lie on the Cytoplasmic side of the membrane. 356-475 (LFHGVSFTCM…RVILNNLSQK (120 aa)) serves as a coordination point for a nucleoside 3',5'-cyclic phosphate. The KHA domain maps to 530–601 (RVTIHMYSQR…DGDHLFFMEI (72 aa)).

Belongs to the potassium channel family. Plant (TC 1.A.1.4) subfamily.

It localises to the membrane. Functionally, probable inward-rectifying potassium channel. Assuming opened or closed conformations in response to the voltage difference across the membrane, the channel is activated by hyperpolarization. This is Potassium channel KAT2 from Oryza sativa subsp. japonica (Rice).